The primary structure comprises 36 residues: Pancreatic polypeptide (36 aa).

A Tyrosine amide modification is found at Tyr36.

The protein belongs to the NPY family.

The protein resides in the secreted. Hormone secreted by pancreatic cells that acts as a regulator of pancreatic and gastrointestinal functions. The protein is Pancreatic polypeptide (PPY) of Struthio camelus (Common ostrich).